The primary structure comprises 116 residues: FK506-binding protein 1 (116 aa).

The 98-residue stretch at 19 to 116 folds into the PPIase FKBP-type domain; sequence GDKVSIHYTG…IFEVELLKIN (98 aa).

The protein belongs to the FKBP-type PPIase family. FKBP1 subfamily.

It is found in the cytoplasm. It carries out the reaction [protein]-peptidylproline (omega=180) = [protein]-peptidylproline (omega=0). With respect to regulation, inhibited by both FK506 and rapamycin. Its function is as follows. PPIases accelerate the folding of proteins. It catalyzes the cis-trans isomerization of proline imidic peptide bonds in oligopeptides. This Aspergillus oryzae (strain ATCC 42149 / RIB 40) (Yellow koji mold) protein is FK506-binding protein 1 (fpr1).